Reading from the N-terminus, the 479-residue chain is Signal recognition particle subunit SRP54 1 (479 aa).

The segment at 1–295 is G-domain; sequence MVLAELGGRI…DVKPFVSRLL (295 aa). GTP-binding positions include 108–115, 190–194, and 248–251; these read GLQGAGKT, DTSGR, and TKMD. An M-domain region spans residues 296-479; sequence GKGDWSGLVD…MMGMFGGGGK (184 aa).

It belongs to the GTP-binding SRP family. SRP54 subfamily. Component of a signal recognition particle (SRP) complex that consists of a 7SL RNA molecule of 300 nucleotides and six protein subunits: SRP72, SRP68, SRP54, SRP19, SRP14 and SRP9.

The protein localises to the cytoplasm. The protein resides in the endoplasmic reticulum. It carries out the reaction GTP + H2O = GDP + phosphate + H(+). Functionally, component of the signal recognition particle (SRP) complex, a ribonucleoprotein complex that mediates the cotranslational targeting of secretory and membrane proteins to the endoplasmic reticulum (ER). As part of the SRP complex, associates with the SRP receptor (SR) component SRPRA to target secretory proteins to the endoplasmic reticulum membrane. Binds to the signal sequence of presecretory proteins when they emerge from the ribosomes. Displays basal GTPase activity, and stimulates reciprocal GTPase activation of the SR subunit SRPRA. Forms a guanosine 5'-triphosphate (GTP)-dependent complex with the SR subunit SRPRA. SR compaction and GTPase mediated rearrangement of SR drive SRP-mediated cotranslational protein translocation into the ER. Requires the presence of SRP9/SRP14 and/or SRP19 to stably interact with RNA. This chain is Signal recognition particle subunit SRP54 1 (SRP-54A), found in Arabidopsis thaliana (Mouse-ear cress).